A 944-amino-acid chain; its full sequence is MESLQGKESNGAVPVCNGGGGAAAPPAKQQLPEGTDALRYANILRSRNKFADALQLYTTVLDKDGANVEALIGKGICLQAQSLPRQALDCFTEAVKVDPKNACALTHCGMIYKDEGHLVEAAEAYQKARSADPSYKAASEFLAIVLTDLGTSLKLAGNTEDGIQKYCEALEVDSHYAPAYYNLGVVYSEMMQFDVALTCYEKAALERPLYAEAYCNMGVIYKNRGELDAAIACYDRCLTISPNFEIAKNNMAIALTDLGTKVKIEGDINQGVAYYKKALFYNWHYADAMYNLGVAYGEMLNFEMAIVFYELALHFNPRCAEACNNLGVIYKDRDNLDKAVECYQMALSIKPNFSQSLNNLGVVYTVQGKMDAAASMIEKAILANPTYAEAYNNLGVLYRDAGSITLSVQAYERCLQIDPDSRNAGQNRLLAMNYIDEGSDDKLYDAHREWGKRFMKLYAQYTSWDNPKVADRPLVIGYVSPDFFTHSVSYFVEAPLTHHDYTKCKVVVYSGVVKADAKTLRFKDKVLKKGGVWRDIYGIDEKKVATLVREDKVDILVELTGHTANNKLGTMACRPAPIQVTWIGYPNTTGLPAIDYRITDSLADSPNTNQKHVEELVRLPESFLCYTPSPEAGPVCPTPAISNGFITFGSFNNLAKITPKVMQVWARILCAVPNSRLVVKCKPFCCDSIRQKFLSTLEELGLESLRVDLLPLIHLNHDHMQAYSLMDISLDTFPYAGTTTTCESLYMGVPCVTMAGSVHAHNVGVSLLTKVGLGRLVAKTEDEYVSLALDLASDVSALEELRKSLRELMIKSPVCDGESFTRGLESAYRSMWHRYCDGDSPALRRLEVLADQTGEDLNKTAVKLADLKAQRVNATAEEDNQSPVTKFDATSKGGEQPQPQIMVNGVTSPEGNQAVKAQPQIMVNGVSSPHSPSGRCEANGHSSR.

TPR repeat units lie at residues 34–67 (GTDALRYANILRSRNKFADALQLYTTVLDKDGAN), 68–101 (VEALIGKGICLQAQSLPRQALDCFTEAVKVDPKN), 102–135 (ACALTHCGMIYKDEGHLVEAAEAYQKARSADPSY), 143–176 (AIVLTDLGTSLKLAGNTEDGIQKYCEALEVDSHY), 177–210 (APAYYNLGVVYSEMMQFDVALTCYEKAALERPLY), 211–244 (AEAYCNMGVIYKNRGELDAAIACYDRCLTISPNF), 252–285 (AIALTDLGTKVKIEGDINQGVAYYKKALFYNWHY), 286–319 (ADAMYNLGVAYGEMLNFEMAIVFYELALHFNPRC), 320–353 (AEACNNLGVIYKDRDNLDKAVECYQMALSIKPNF), 355–387 (QSLNNLGVVYTVQGKMDAAASMIEKAILANPTY), and 388–421 (AEAYNNLGVLYRDAGSITLSVQAYERCLQIDPDS). Positions 422-944 (RNAGQNRLLA…RCEANGHSSR (523 aa)) are catalytic region. Positions 873-944 (NATAEEDNQS…RCEANGHSSR (72 aa)) are disordered. Over residues 897-911 (PQPQIMVNGVTSPEG) the composition is skewed to polar residues.

Belongs to the glycosyltransferase 41 family. O-GlcNAc transferase subfamily. In terms of tissue distribution, expressed in all parts of plants, including immature leaf blade, leaf sheath, mature leaf blade, roots, germinating embryos and aleurone layers.

The protein resides in the nucleus. It catalyses the reaction L-seryl-[protein] + UDP-N-acetyl-alpha-D-glucosamine = 3-O-(N-acetyl-beta-D-glucosaminyl)-L-seryl-[protein] + UDP + H(+). The enzyme catalyses L-threonyl-[protein] + UDP-N-acetyl-alpha-D-glucosamine = 3-O-(N-acetyl-beta-D-glucosaminyl)-L-threonyl-[protein] + UDP + H(+). It functions in the pathway protein modification; protein glycosylation. Its function is as follows. Probable O-linked N-acetylglucosamine transferase (OGT) involved in various processes such as gibberellin (GA) signaling pathway. OGTs catalyze the addition of nucleotide-activated sugars directly onto the polypeptide through O-glycosidic linkage with the hydroxyl of serine or threonine. Probably acts by adding O-linked sugars to yet unknown proteins. The chain is Probable UDP-N-acetylglucosamine--peptide N-acetylglucosaminyltransferase SPINDLY (SPY) from Hordeum vulgare (Barley).